A 126-amino-acid chain; its full sequence is Probable DNA-directed RNA polymerase II subunit RPB11 (126 aa).

This sequence belongs to the archaeal Rpo11/eukaryotic RPB11/RPC19 RNA polymerase subunit family. As to quaternary structure, component of the RNA polymerase II (Pol II) complex consisting of 12 subunits.

It localises to the nucleus. Its function is as follows. DNA-dependent RNA polymerase catalyzes the transcription of DNA into RNA using the four ribonucleoside triphosphates as substrates. Component of RNA polymerase II which synthesizes mRNA precursors and many functional non-coding RNAs. Pol II is the central component of the basal RNA polymerase II transcription machinery. It is composed of mobile elements that move relative to each other. RPB11 is part of the core element with the central large cleft. The chain is Probable DNA-directed RNA polymerase II subunit RPB11 from Plasmodium chabaudi chabaudi.